A 269-amino-acid chain; its full sequence is GTP cyclohydrolase FolE2 (269 aa).

Belongs to the GTP cyclohydrolase IV family.

It catalyses the reaction GTP + H2O = 7,8-dihydroneopterin 3'-triphosphate + formate + H(+). Its pathway is cofactor biosynthesis; 7,8-dihydroneopterin triphosphate biosynthesis; 7,8-dihydroneopterin triphosphate from GTP: step 1/1. Functionally, converts GTP to 7,8-dihydroneopterin triphosphate. The polypeptide is GTP cyclohydrolase FolE2 (Burkholderia vietnamiensis (strain G4 / LMG 22486) (Burkholderia cepacia (strain R1808))).